The chain runs to 527 residues: Amine oxidase [flavin-containing] A (527 aa).

Met1 is modified (N-acetylmethionine). Over 1–497 (MASREKTSIE…HTFWERNLPS (497 aa)) the chain is Cytoplasmic. Phosphoserine is present on Ser383. Cys406 carries the post-translational modification S-8alpha-FAD cysteine. The helical; Anchor for type IV membrane protein transmembrane segment at 498 to 518 (VTGLLKLIGFTTSVTALWIVA) threads the bilayer. The Mitochondrial intermembrane segment spans residues 519–527 (YKFRLLRRS). The interval 520-522 (KFR) is interaction with membrane phospholipid headgroups.

The protein belongs to the flavin monoamine oxidase family. As to quaternary structure, monomer, homo- or heterodimer (containing two subunits of similar size). Each subunit contains a covalently bound flavin. Enzymatically active as monomer. FAD is required as a cofactor.

It is found in the mitochondrion outer membrane. It catalyses the reaction a secondary aliphatic amine + O2 + H2O = a primary amine + an aldehyde + H2O2. The enzyme catalyses a primary methyl amine + O2 + H2O = an aldehyde + H2O2 + NH4(+). It carries out the reaction (R)-adrenaline + O2 + H2O = (R)-3,4-dihydroxymandelaldehyde + methylamine + H2O2. The catalysed reaction is dopamine + O2 + H2O = 3,4-dihydroxyphenylacetaldehyde + H2O2 + NH4(+). It catalyses the reaction tyramine + O2 + H2O = (4-hydroxyphenyl)acetaldehyde + H2O2 + NH4(+). The enzyme catalyses (R)-noradrenaline + O2 + H2O = (R)-3,4-dihydroxymandelaldehyde + H2O2 + NH4(+). It carries out the reaction serotonin + O2 + H2O = (5-hydroxyindol-3-yl)acetaldehyde + H2O2 + NH4(+). The catalysed reaction is kynuramine + O2 + H2O = 3-(2-aminophenyl)-3-oxopropanal + H2O2 + NH4(+). It catalyses the reaction tryptamine + O2 + H2O = indole-3-acetaldehyde + H2O2 + NH4(+). The enzyme catalyses 2-phenylethylamine + O2 + H2O = 2-phenylacetaldehyde + H2O2 + NH4(+). Its function is as follows. Catalyzes the oxidative deamination of primary and some secondary amine such as neurotransmitters, with concomitant reduction of oxygen to hydrogen peroxide and has important functions in the metabolism of neuroactive and vasoactive amines in the central nervous system and peripheral tissues. Preferentially oxidizes serotonin. Also catalyzes the oxidative deamination of kynuramine to 3-(2-aminophenyl)-3-oxopropanal that can spontaneously condense to 4-hydroxyquinoline. The chain is Amine oxidase [flavin-containing] A from Canis lupus familiaris (Dog).